The following is a 363-amino-acid chain: Probable dual-specificity RNA methyltransferase RlmN (363 aa).

Residue glutamate 106 is the Proton acceptor of the active site. One can recognise a Radical SAM core domain in the interval 112-345; sequence HEYGNSVCVT…VTIRREQGHD (234 aa). Cysteines 119 and 350 form a disulfide. [4Fe-4S] cluster is bound by residues cysteine 126, cysteine 130, and cysteine 133. S-adenosyl-L-methionine contacts are provided by residues 176 to 177, serine 208, 231 to 233, and asparagine 307; these read GE and SLH. The active-site S-methylcysteine intermediate is the cysteine 350.

Belongs to the radical SAM superfamily. RlmN family. [4Fe-4S] cluster serves as cofactor.

It localises to the cytoplasm. The catalysed reaction is adenosine(2503) in 23S rRNA + 2 reduced [2Fe-2S]-[ferredoxin] + 2 S-adenosyl-L-methionine = 2-methyladenosine(2503) in 23S rRNA + 5'-deoxyadenosine + L-methionine + 2 oxidized [2Fe-2S]-[ferredoxin] + S-adenosyl-L-homocysteine. The enzyme catalyses adenosine(37) in tRNA + 2 reduced [2Fe-2S]-[ferredoxin] + 2 S-adenosyl-L-methionine = 2-methyladenosine(37) in tRNA + 5'-deoxyadenosine + L-methionine + 2 oxidized [2Fe-2S]-[ferredoxin] + S-adenosyl-L-homocysteine. In terms of biological role, specifically methylates position 2 of adenine 2503 in 23S rRNA and position 2 of adenine 37 in tRNAs. The sequence is that of Probable dual-specificity RNA methyltransferase RlmN from Bacillus velezensis (strain DSM 23117 / BGSC 10A6 / LMG 26770 / FZB42) (Bacillus amyloliquefaciens subsp. plantarum).